Here is a 110-residue protein sequence, read N- to C-terminus: Toxin HigB-2 (110 aa).

Toxic component of a type II toxin-antitoxin (TA) system. Inhibits translation by cleavage of mRNA. This is Toxin HigB-2 (higB-2) from Vibrio cholerae serotype O1 (strain ATCC 39315 / El Tor Inaba N16961).